We begin with the raw amino-acid sequence, 445 residues long: tRNA modification GTPase MnmE (445 aa).

Residues R25, E83, and K121 each coordinate (6S)-5-formyl-5,6,7,8-tetrahydrofolate. Positions G217–R371 constitute a TrmE-type G domain. Residues N227–T232, S246–T252, and D271–G274 each bind GTP. The Mg(2+) site is built by S231 and T252. K445 is a binding site for (6S)-5-formyl-5,6,7,8-tetrahydrofolate.

It belongs to the TRAFAC class TrmE-Era-EngA-EngB-Septin-like GTPase superfamily. TrmE GTPase family. As to quaternary structure, homodimer. Heterotetramer of two MnmE and two MnmG subunits. It depends on K(+) as a cofactor.

The protein localises to the cytoplasm. Its function is as follows. Exhibits a very high intrinsic GTPase hydrolysis rate. Involved in the addition of a carboxymethylaminomethyl (cmnm) group at the wobble position (U34) of certain tRNAs, forming tRNA-cmnm(5)s(2)U34. In Anaplasma phagocytophilum (strain HZ), this protein is tRNA modification GTPase MnmE.